Consider the following 244-residue polypeptide: UDP-2,3-diacylglucosamine hydrolase (244 aa).

Residues Asp8, His10, Asp41, Asn79, and His114 each contribute to the Mn(2+) site. A substrate-binding site is contributed by 79-80 (NR). Substrate contacts are provided by Asp122, Ser160, Asn164, Lys167, and His195. Mn(2+) is bound by residues His195 and His197.

This sequence belongs to the LpxH family. Requires Mn(2+) as cofactor.

The protein localises to the cell inner membrane. It catalyses the reaction UDP-2-N,3-O-bis[(3R)-3-hydroxytetradecanoyl]-alpha-D-glucosamine + H2O = 2-N,3-O-bis[(3R)-3-hydroxytetradecanoyl]-alpha-D-glucosaminyl 1-phosphate + UMP + 2 H(+). It functions in the pathway glycolipid biosynthesis; lipid IV(A) biosynthesis; lipid IV(A) from (3R)-3-hydroxytetradecanoyl-[acyl-carrier-protein] and UDP-N-acetyl-alpha-D-glucosamine: step 4/6. Its function is as follows. Hydrolyzes the pyrophosphate bond of UDP-2,3-diacylglucosamine to yield 2,3-diacylglucosamine 1-phosphate (lipid X) and UMP by catalyzing the attack of water at the alpha-P atom. Involved in the biosynthesis of lipid A, a phosphorylated glycolipid that anchors the lipopolysaccharide to the outer membrane of the cell. This chain is UDP-2,3-diacylglucosamine hydrolase, found in Hahella chejuensis (strain KCTC 2396).